A 422-amino-acid chain; its full sequence is Putative serpin-Z8 (422 aa).

An RCL region spans residues 369–393 (GTVAAAATMTRMLPSGVPPPPVDFV).

Belongs to the serpin family.

Probable serine protease inhibitor. The protein is Putative serpin-Z8 of Oryza sativa subsp. japonica (Rice).